The following is a 709-amino-acid chain: Glycerol kinase (709 aa).

A substrate-binding site is contributed by T56. R60 contacts ATP. The interval 86-110 (KIGVSGLRRPSTAPARETPNAGDIK) is disordered. The substrate site is built by R201, Y258, and D386. Residues T408, G463, and 584–588 (GMSRS) contribute to the ATP site.

It belongs to the FGGY kinase family.

The enzyme catalyses glycerol + ATP = sn-glycerol 3-phosphate + ADP + H(+). Its pathway is polyol metabolism; glycerol degradation via glycerol kinase pathway; sn-glycerol 3-phosphate from glycerol: step 1/1. Its function is as follows. Key enzyme in the regulation of glycerol uptake and metabolism. Catalyzes the phosphorylation of glycerol to yield sn-glycerol 3-phosphate. This chain is Glycerol kinase (GUT1), found in Saccharomyces cerevisiae (strain ATCC 204508 / S288c) (Baker's yeast).